The primary structure comprises 174 residues: UPF0113 protein AF_0058 (174 aa).

Positions 87–161 (RNRVWVNERG…KVFVENLVDR (75 aa)) constitute a PUA domain.

Belongs to the UPF0113 family.

The sequence is that of UPF0113 protein AF_0058 from Archaeoglobus fulgidus (strain ATCC 49558 / DSM 4304 / JCM 9628 / NBRC 100126 / VC-16).